The following is a 61-amino-acid chain: Large ribosomal subunit protein uL30 (61 aa).

It belongs to the universal ribosomal protein uL30 family. In terms of assembly, part of the 50S ribosomal subunit.

The sequence is that of Large ribosomal subunit protein uL30 from Oenococcus oeni (strain ATCC BAA-331 / PSU-1).